Here is a 103-residue protein sequence, read N- to C-terminus: Histone H4 (103 aa).

The segment covering 1–14 (MSGRGKGGKGLGKG) has biased composition (gly residues). The interval 1–20 (MSGRGKGGKGLGKGGAKRHR) is disordered. Serine 2 carries the post-translational modification N-acetylserine. Lysine 6 and lysine 13 each carry N6-acetyl-N6-methyllysine; alternate. Residues 17 to 21 (KRHRK) mediate DNA binding. An N6-methyllysine modification is found at lysine 21.

The protein belongs to the histone H4 family. As to quaternary structure, the nucleosome is a histone octamer containing two molecules each of H2A, H2B, H3 and H4 assembled in one H3-H4 heterotetramer and two H2A-H2B heterodimers. The octamer wraps approximately 147 bp of DNA.

Its subcellular location is the nucleus. The protein resides in the chromosome. In terms of biological role, core component of nucleosome. Nucleosomes wrap and compact DNA into chromatin, limiting DNA accessibility to the cellular machineries which require DNA as a template. Histones thereby play a central role in transcription regulation, DNA repair, DNA replication and chromosomal stability. DNA accessibility is regulated via a complex set of post-translational modifications of histones, also called histone code, and nucleosome remodeling. The chain is Histone H4 from Solaster stimpsoni (Striped sun sea star).